The primary structure comprises 322 residues: RNA-binding motif protein, X-linked 2 (322 aa).

Lys8 participates in a covalent cross-link: Glycyl lysine isopeptide (Lys-Gly) (interchain with G-Cter in SUMO2). The 79-residue stretch at 36-114 folds into the RRM domain; it reads AWIFLGGLPY…RTIRVDHVSN (79 aa). The disordered stretch occupies residues 134–322; the sequence is KGCGARTPSP…SSNPSDRWRH (189 aa). Thr140 bears the Phosphothreonine mark. A Phosphoserine modification is found at Ser149. A compositionally biased stretch (basic residues) spans 155–171; the sequence is TKKHKKDKKEKKKKKKE. Ser186 and Ser188 each carry phosphoserine. A compositionally biased stretch (basic and acidic residues) spans 195–223; sequence KEKDDTGPKKHSSKNSERAQKSEPREGQK. Residue Ser232 is modified to Phosphoserine. The segment covering 240 to 274 has biased composition (basic and acidic residues); that stretch reads RELKKEKPKHEHKSSSRREAREEKTRIRDRGRSSD. A Glycyl lysine isopeptide (Lys-Gly) (interchain with G-Cter in SUMO2) cross-link involves residue Lys243. Residue Ser272 is modified to Phosphoserine. Over residues 289–308 the composition is skewed to basic residues; sequence YRSRSRSRDKSHRHKRARRS. Ser314 is subject to Phosphoserine.

Belongs to the IST3 family. In terms of assembly, part of the activated spliceosome B/catalytic step 1 spliceosome, one of the forms of the spliceosome which has a well-formed active site but still cannot catalyze the branching reaction and is composed of at least 52 proteins, the U2, U5 and U6 snRNAs and the pre-mRNA. Component of the minor spliceosome, which splices U12-type introns.

The protein resides in the nucleus. Functionally, involved in pre-mRNA splicing as component of the activated spliceosome. As a component of the minor spliceosome, involved in the splicing of U12-type introns in pre-mRNAs. The protein is RNA-binding motif protein, X-linked 2 (RBMX2) of Homo sapiens (Human).